The chain runs to 475 residues: Aspartyl/glutamyl-tRNA(Asn/Gln) amidotransferase subunit B (475 aa).

It belongs to the GatB/GatE family. GatB subfamily. As to quaternary structure, heterotrimer of A, B and C subunits.

It carries out the reaction L-glutamyl-tRNA(Gln) + L-glutamine + ATP + H2O = L-glutaminyl-tRNA(Gln) + L-glutamate + ADP + phosphate + H(+). It catalyses the reaction L-aspartyl-tRNA(Asn) + L-glutamine + ATP + H2O = L-asparaginyl-tRNA(Asn) + L-glutamate + ADP + phosphate + 2 H(+). Its function is as follows. Allows the formation of correctly charged Asn-tRNA(Asn) or Gln-tRNA(Gln) through the transamidation of misacylated Asp-tRNA(Asn) or Glu-tRNA(Gln) in organisms which lack either or both of asparaginyl-tRNA or glutaminyl-tRNA synthetases. The reaction takes place in the presence of glutamine and ATP through an activated phospho-Asp-tRNA(Asn) or phospho-Glu-tRNA(Gln). This Trichlorobacter lovleyi (strain ATCC BAA-1151 / DSM 17278 / SZ) (Geobacter lovleyi) protein is Aspartyl/glutamyl-tRNA(Asn/Gln) amidotransferase subunit B.